Reading from the N-terminus, the 315-residue chain is Eukaryotic translation initiation factor 2 subunit 1 (315 aa).

The 72-residue stretch at 17–88 folds into the S1 motif domain; that stretch reads EDVVMVNVRS…EKGYIDLSKR (72 aa). 2 positions are modified to phosphoserine: S49 and S52. The segment at 292 to 315 is disordered; that stretch reads RLERENAEVDGDDDAEEMEAKTED. Positions 299–308 are enriched in acidic residues; sequence EVDGDDDAEE.

Belongs to the eIF-2-alpha family. As to quaternary structure, eukaryotic translation initiation factor 2 eIF2 is a heterotrimeric complex composed of an alpha (EIF2S1), a beta (EIF2S2) and a gamma (EIF2S3) chain. In terms of processing, phosphorylation at Ser-49 and Ser-52 stabilizes the eIF-2/GDP/eIF2B complex and prevents GDP/GTP exchange reaction, thus impairing the recycling of eIF-2 between successive rounds of initiation and leading to global inhibition of translation, while concomitantly initiating the preferential translation of integrated stress response (ISR)-specific mRNAs.

The protein localises to the cytoplasm. It is found in the stress granule. Its subcellular location is the cytosol. Activity is regulated by phosphorylation at Ser-49 and Ser-52, which stabilizes the eIF2/GDP/eIF2B complex and prevents the eIF2B-mediated exchange of GDP for GTP, thereby preventing the formation of the 43S pre-initiation complex (43S PIC). This results in the global attenuation of 5' cap-dependent protein synthesis and concomitant translation of ISR-specific mRNAs that contain a short upstream open reading frame (uORF) in their 5' UTR. Functionally, member of the eIF2 complex that functions in the early steps of protein synthesis by forming a ternary complex with GTP and initiator tRNA. This complex binds to a 40S ribosomal subunit, followed by mRNA binding to form a 43S pre-initiation complex. Junction of the 60S ribosomal subunit to form the 80S initiation complex is preceded by hydrolysis of the GTP bound to eIF2 and release of an eIF2-GDP binary complex. In order for eIF2 to recycle and catalyze another round of initiation, the GDP bound to eIF2 must exchange with GTP by way of a reaction catalyzed by eIF2B. EIF2S1/eIF2-alpha is a key component of the integrated stress response (ISR), required for adaptation to various stress: phosphorylation by metabolic-stress sensing protein kinases (EIF2AK1/HRI, EIF2AK2/PKR, EIF2AK3/PERK and EIF2AK4/GCN2) in response to stress converts EIF2S1/eIF2-alpha in a global protein synthesis inhibitor, leading to a attenuation of cap-dependent translation, while concomitantly initiating the preferential translation of ISR-specific mRNAs, such as the transcriptional activators ATF4 and QRICH1. The chain is Eukaryotic translation initiation factor 2 subunit 1 (EIF2S1) from Gallus gallus (Chicken).